Consider the following 115-residue polypeptide: Superoxide reductase (115 aa).

The Fe cation site is built by glutamate 14, histidine 16, histidine 41, histidine 47, cysteine 102, and histidine 105.

It belongs to the desulfoferrodoxin family. In terms of assembly, homotetramer. Fe cation is required as a cofactor.

The enzyme catalyses reduced [rubredoxin] + superoxide + 2 H(+) = oxidized [rubredoxin] + H2O2. Its function is as follows. Uses electrons from reduced NADP, by way of rubredoxin and an oxidoreductase, to catalyze the reduction of superoxide to hydrogen peroxide. The chain is Superoxide reductase (sorA) from Pyrococcus abyssi (strain GE5 / Orsay).